Reading from the N-terminus, the 118-residue chain is Probable non-functional immunoglobulin lambda variable 2-33 (118 aa).

The first 19 residues, 1 to 19 (MAWALLLLTLLTQGTGSWA), serve as a signal peptide directing secretion. Residues 20–44 (QSALTQPPFVSGAPGQSVTISCTGT) are framework-1. One can recognise an Ig-like domain in the interval 34–118 (GQSVTISCTG…CSLYSSSYTF (85 aa)). Cys41 and Cys109 are disulfide-bonded. A complementarity-determining-1 region spans residues 45 to 53 (SSDVGDYDH). Residues 54-70 (VFWYQKRLSTTSRLLIY) form a framework-2 region. The segment at 71-73 (NVN) is complementarity-determining-2. A framework-3 region spans residues 74 to 109 (TRPSGISDLFSGSKSGNMASLTISGLKSEVEANYHC). A complementarity-determining-3 region spans residues 110-118 (SLYSSSYTF).

In terms of assembly, immunoglobulins are composed of two identical heavy chains and two identical light chains; disulfide-linked.

It is found in the secreted. The protein localises to the cell membrane. Functionally, probable non-functional open reading frame (ORF) of V region of the variable domain of immunoglobulin light chains. Non-functional ORF generally cannot participate in the synthesis of a productive immunoglobulin chain due to altered V-(D)-J or switch recombination and/or splicing site (at mRNA level) and/or conserved amino acid change (protein level). Immunoglobulins, also known as antibodies, are membrane-bound or secreted glycoproteins produced by B lymphocytes. In the recognition phase of humoral immunity, the membrane-bound immunoglobulins serve as receptors which, upon binding of a specific antigen, trigger the clonal expansion and differentiation of B lymphocytes into immunoglobulins-secreting plasma cells. Secreted immunoglobulins mediate the effector phase of humoral immunity, which results in the elimination of bound antigens. The antigen binding site is formed by the variable domain of one heavy chain, together with that of its associated light chain. Thus, each immunoglobulin has two antigen binding sites with remarkable affinity for a particular antigen. The variable domains are assembled by a process called V-(D)-J rearrangement and can then be subjected to somatic hypermutations which, after exposure to antigen and selection, allow affinity maturation for a particular antigen. The chain is Probable non-functional immunoglobulin lambda variable 2-33 from Homo sapiens (Human).